Here is a 421-residue protein sequence, read N- to C-terminus: Probable UDP-arabinose 4-epimerase 1 (421 aa).

Over 1-33 (MLPTNRNRPQQRPARSWYFISDMDFSDPKRKPR) the chain is Cytoplasmic. The helical; Signal-anchor for type II membrane protein transmembrane segment at 34–53 (YLSKILMVALLTAMCVVMLT) threads the bilayer. The Lumenal segment spans residues 54–421 (QPPCHRRTPS…GYGPPQAMVL (368 aa)). 74 to 105 (HVLVTGGAGYIGSHAALRLLKDSFRVTIVDNL) provides a ligand contact to NAD(+). Y222 functions as the Proton acceptor in the catalytic mechanism.

It belongs to the NAD(P)-dependent epimerase/dehydratase family. Requires NAD(+) as cofactor.

The protein localises to the golgi apparatus. Its subcellular location is the golgi stack membrane. The catalysed reaction is UDP-beta-L-arabinopyranose = UDP-alpha-D-xylose. It functions in the pathway nucleotide-sugar biosynthesis; UDP-L-arabinose biosynthesis; UDP-L-arabinose from UDP-alpha-D-xylose: step 1/1. It participates in cell wall biogenesis; cell wall polysaccharide biosynthesis. The chain is Probable UDP-arabinose 4-epimerase 1 (UEL-1) from Oryza sativa subsp. japonica (Rice).